The chain runs to 538 residues: Cytochrome P450 52-M1 (538 aa).

The helical transmembrane segment at 18-38 (GLLPLLFVAFLVLHEPIWLLW) threads the bilayer. C484 is a binding site for heme.

Belongs to the cytochrome P450 family. Heme is required as a cofactor.

The protein localises to the membrane. It carries out the reaction an omega-methyl-long-chain fatty acid + reduced [NADPH--hemoprotein reductase] + O2 = an omega-hydroxy-long-chain fatty acid + oxidized [NADPH--hemoprotein reductase] + H2O + H(+). The enzyme catalyses an (omega-1)-ethyl fatty acid + reduced [NADPH--hemoprotein reductase] + O2 = an (omega-1)-hydroxy-long-chain fatty acid + oxidized [NADPH--hemoprotein reductase] + H2O + H(+). The catalysed reaction is (9Z)-octadecenoate + reduced [NADPH--hemoprotein reductase] + O2 = 18-hydroxy-(9Z)-octadecenoate + oxidized [NADPH--hemoprotein reductase] + H2O + H(+). It catalyses the reaction (9Z)-octadecenoate + reduced [NADPH--hemoprotein reductase] + O2 = 17-hydroxy-(9Z)-octadecenoate + oxidized [NADPH--hemoprotein reductase] + H2O + H(+). It carries out the reaction (9Z,12Z)-octadecadienoate + reduced [NADPH--hemoprotein reductase] + O2 = 18-hydroxy-(9Z,12Z)-octadecadienoate + oxidized [NADPH--hemoprotein reductase] + H2O + H(+). The enzyme catalyses (9Z,12Z)-octadecadienoate + reduced [NADPH--hemoprotein reductase] + O2 = 17-hydroxy-(9Z,12Z)-octadecadienoate + oxidized [NADPH--hemoprotein reductase] + H2O + H(+). The catalysed reaction is hexadecanoate + reduced [NADPH--hemoprotein reductase] + O2 = 16-hydroxyhexadecanoate + oxidized [NADPH--hemoprotein reductase] + H2O + H(+). It catalyses the reaction (9Z)-hexadecenoate + reduced [NADPH--hemoprotein reductase] + O2 = (9Z)-16-hydroxyhexadec-9-enoate + oxidized [NADPH--hemoprotein reductase] + H2O + H(+). It carries out the reaction octadecanoate + reduced [NADPH--hemoprotein reductase] + O2 = 18-hydroxyoctadecanoate + oxidized [NADPH--hemoprotein reductase] + H2O + H(+). Functionally, catalyzes the first step of sophorolipid biosynthesis. Catalyzes the terminal (at the omega-position) or subterminal (at the omega(-1)-position) hydroxylation of a fatty acid. This converts the fatty acid to a substrate for the subsequent glycosyltransferase reactions. Oleic acid is the preferred substrate, but it acts on various other C-16, C-18 and C-20 saturated and unsaturated fatty acids, namely palmitic, palmitoleic, stearic, linoleic, cis-9,10-epoxystearic, trans-9,10-epoxystearic and arachidonic acid. This Starmerella bombicola (Yeast) protein is Cytochrome P450 52-M1.